A 269-amino-acid chain; its full sequence is Small ribosomal subunit protein uS2 (269 aa).

The tract at residues 235 to 269 (FDAKNPLKPQNYNTLNKRPYQDSPRKPSYQNQNQR) is disordered.

This sequence belongs to the universal ribosomal protein uS2 family.

The polypeptide is Small ribosomal subunit protein uS2 (Aster yellows witches'-broom phytoplasma (strain AYWB)).